The following is a 334-amino-acid chain: NH(3)-dependent NAD(+) synthetase (334 aa).

ATP is bound at residue 47-54 (GLSGGIDS). Aspartate 53 provides a ligand contact to Mg(2+). Deamido-NAD(+) is bound at residue arginine 183. Threonine 203 contacts ATP. Glutamate 208 provides a ligand contact to Mg(2+). The deamido-NAD(+) site is built by lysine 216 and aspartate 223. Positions 232 and 254 each coordinate ATP.

Belongs to the NAD synthetase family. In terms of assembly, homodimer.

It carries out the reaction deamido-NAD(+) + NH4(+) + ATP = AMP + diphosphate + NAD(+) + H(+). It functions in the pathway cofactor biosynthesis; NAD(+) biosynthesis; NAD(+) from deamido-NAD(+) (ammonia route): step 1/1. In terms of biological role, catalyzes the ATP-dependent amidation of deamido-NAD to form NAD. Uses ammonia as a nitrogen source. The sequence is that of NH(3)-dependent NAD(+) synthetase from Rhizobium meliloti (strain 1021) (Ensifer meliloti).